A 178-amino-acid polypeptide reads, in one-letter code: Cysteine-rich venom protein VAR3 (178 aa).

A signal peptide spans 1–22; that stretch reads MILLKLYLTLAAILCQSRGTTS. Residues 41–169 form the SCP domain; sequence NKHNDLRRTV…PLKYFLVCQY (129 aa). Cystine bridges form between Cys77/Cys156, Cys95/Cys170, and Cys151/Cys167.

It belongs to the CRISP family. Post-translationally, contains 8 disulfide bonds. In terms of tissue distribution, expressed by the venom gland.

It localises to the secreted. Its function is as follows. Blocks ryanodine receptors, and potassium channels. This is Cysteine-rich venom protein VAR3 from Varanus acanthurus (Ridge-tailed monitor).